A 497-amino-acid chain; its full sequence is MAKYIMAFDQGTTSSRAIIFDHSGKIVASQNQEFKQIYPKAGWVEHDPMEIWGTQIGVAKGVIEKAGINPEDIAAIGITNQRETTVVWDKNTGKPIYNAIVWQCRRTAPICDELKNKGFDKKIREKTGLVVDAYFSGTKIKWILDNVEGAREKAEKGELLFGNIDTWLIWNLTRGKVHVTDYSNASRTMLFNIHELKWDKEILEELNVPEQMLPEVKPSSYVYGYTDKSIFGVEIPIAGDAGDQQAALFGQACFKPGMAKNTYGTGCFMLMNTGEKAVPSNTGLLTTIAWGIDGKVEYALEGSIFIAGAAIQWLRDELRIIDNSPQSEEYALKVEDTNGVYVVPAFVGLGAPYWDMYARGTIVGLTRGAKREHIIRATLESIAYQTRDVLEAMQEDSGIKLQALKIDGGASANNFLMQFQSDILGVPVDRPQVIETTALGASYLAGLAVGFWNSKEEIEKNWNVDKHFEPAMDNEKREKLYKGWKKAVERAMKWAEE.

T12 lines the ADP pocket. ATP is bound by residues T12, T13, and S14. T12 contributes to the sn-glycerol 3-phosphate binding site. R16 lines the ADP pocket. 4 residues coordinate sn-glycerol 3-phosphate: R82, E83, Y134, and D243. Glycerol contacts are provided by R82, E83, Y134, D243, and Q244. Positions 265 and 308 each coordinate ADP. The ATP site is built by T265, G308, Q312, and G409. 2 residues coordinate ADP: G409 and N413.

The protein belongs to the FGGY kinase family. Homotetramer and homodimer (in equilibrium).

The enzyme catalyses glycerol + ATP = sn-glycerol 3-phosphate + ADP + H(+). It functions in the pathway polyol metabolism; glycerol degradation via glycerol kinase pathway; sn-glycerol 3-phosphate from glycerol: step 1/1. With respect to regulation, activated by phosphorylation and inhibited by fructose 1,6-bisphosphate (FBP). Functionally, key enzyme in the regulation of glycerol uptake and metabolism. Catalyzes the phosphorylation of glycerol to yield sn-glycerol 3-phosphate. This chain is Glycerol kinase, found in Thermoanaerobacter sp. (strain X514).